The chain runs to 260 residues: Hydroxyethylthiazole kinase 1 (260 aa).

Residue methionine 39 coordinates substrate. 2 residues coordinate ATP: arginine 115 and threonine 160. Glycine 187 contributes to the substrate binding site.

This sequence belongs to the Thz kinase family. Mg(2+) is required as a cofactor.

The enzyme catalyses 5-(2-hydroxyethyl)-4-methylthiazole + ATP = 4-methyl-5-(2-phosphooxyethyl)-thiazole + ADP + H(+). Its pathway is cofactor biosynthesis; thiamine diphosphate biosynthesis; 4-methyl-5-(2-phosphoethyl)-thiazole from 5-(2-hydroxyethyl)-4-methylthiazole: step 1/1. In terms of biological role, catalyzes the phosphorylation of the hydroxyl group of 4-methyl-5-beta-hydroxyethylthiazole (THZ). The chain is Hydroxyethylthiazole kinase 1 from Streptococcus pneumoniae serotype 2 (strain D39 / NCTC 7466).